We begin with the raw amino-acid sequence, 92 residues long: MTRSVWKGPFVDGYLLKKAEKARASGRNEIIKIWSRRSTILPQFVGLTFGVYNGQKFLPVLVTENMIGHKFGEFSPTRTFYGHAADKKAKRK.

The protein belongs to the universal ribosomal protein uS19 family.

Functionally, protein S19 forms a complex with S13 that binds strongly to the 16S ribosomal RNA. The chain is Small ribosomal subunit protein uS19 from Rhodospirillum centenum (strain ATCC 51521 / SW).